The chain runs to 295 residues: Ankyrin repeat and SOCS box protein 17 (295 aa).

One copy of the ANK repeat lies at S146 to K176. Residues L232–I295 form the SOCS box domain.

Belongs to the ankyrin SOCS box (ASB) family. In terms of tissue distribution, specifically expressed in testis. Not detected in other tissues tested.

Its pathway is protein modification; protein ubiquitination. Functionally, may be a substrate-recognition component of a SCF-like ECS (Elongin-Cullin-SOCS-box protein) E3 ubiquitin-protein ligase complex which mediates the ubiquitination and subsequent proteasomal degradation of target proteins. This Homo sapiens (Human) protein is Ankyrin repeat and SOCS box protein 17 (ASB17).